Here is a 1297-residue protein sequence, read N- to C-terminus: MRILRGSPALSEFRVNKLLTACREQQLPVTGIYAEFMHFADLKAELNPQELEKLEKLLTYGPTIQEHEPQGLLLLVTPRPGTISPWSSKATDIAHNCGLHGIKRLERGTAYYVEAETALTAAQIATLEALLHDRMMEVVFAELTDAQQLFSVAEPAPMSQVDVLAGGRRALEEANVSLGLALAEDEIDYLVESFTKLGRNPNDIELMMFAQANSEHCRHKIFNADWTIDGVKQDKSLFKMIKNTFEQTPDYVLSAYKDNAAVMTGSTVGRFFPDPESRQYTYHHEDAHILMKVETHNHPTAISPWPGASTGSGGEIRDEGATGIGGKPKAGLVGFTTSNLRIPGFEQPWESDFGKPSRIVNALDIMLEGPLGGAAFNNEFGRPNLLGYFRTYEEKVTSHAGEEVRGYHKPIMIAGGMGNIRAEHIQKKEIPVGAKLIVLGGPAMNIGLGGGAASSMASGQSAEDLDFASVQRENPEMERRCQEVIDRCWQLGDKNPIAFIHDVGAGGISNALPELVNDGDRGGKFQLRNVPNDEPGMSPLEIWCNESQERYVLAVAAEDMPLFDAICQRERAPYAVVGEATEERHLTLEDSHFANTPIDMPMDILLGKPPKMHREASTLKVSSPALERSGIELNEAVDRVLRLPAVAEKTFLITIGDRSVTGLVARDQMVGPWQVPVANCAVTAASFDSYHGEAMSMGERTPVALLDFGASARLAVGEAITNIAATDIGELKRIKLSANWMSPAGHPGEDAGLYEAVKAVGEELCPALGITIPVGKDSMSMKTKWQENGEQKEVTSPLSLIITAFARVEDIRKTVTPQLRTDLGETSLILIDLGNGQNRLGATALAQVYKQLGDKPADVDNAAQLKGFFDAVQTLVRNDKLVAYHDKGDGGLLVTLAEMAFAGHCGIKANIETLGDDALAALFNEELGAVVQVKNDELNAVLATLAAHGLEACAHVIGEVEASDRLLITCGEEVLIERSRTELRTIWAEMTHKMQALRDNSACADQEFAAKQDNRDPGLNAKLTYDVQADVAAPYIAKGVRPKMAILREQGVNSHVEMAAAFDRAGFDAVDVHMSDILTGQTVLDAYQGLVACGGFSYGDVLGAGEGWAKSILFNAQAREQFEQFFQRKDTFSLGVCNGCQMLSNLRDLIPGAELWPRFVRNESDRFEARFSLVEVQKSPSLFFSEMAGSRMPIAVSHGEGRVEVRDAQHLAAIEQSGTVAIRFVDNFGQPTQAYPSNPNGSPNAITGLTTQDGRVTIMMPHPERVFRTVANSWHPDNWGENGAWMRMFQNARKYFG.

ATP is bound by residues 307–318 (GASTGSGGEIRD) and alanine 678. Mg(2+) contacts are provided by glutamate 718, asparagine 722, and aspartate 886. Residues 1044-1297 (MAILREQGVN…MFQNARKYFG (254 aa)) enclose the Glutamine amidotransferase type-1 domain. The Nucleophile role is filled by cysteine 1137. Catalysis depends on residues histidine 1262 and glutamate 1264.

This sequence in the N-terminal section; belongs to the FGAMS family. In terms of assembly, monomer.

It is found in the cytoplasm. The enzyme catalyses N(2)-formyl-N(1)-(5-phospho-beta-D-ribosyl)glycinamide + L-glutamine + ATP + H2O = 2-formamido-N(1)-(5-O-phospho-beta-D-ribosyl)acetamidine + L-glutamate + ADP + phosphate + H(+). It participates in purine metabolism; IMP biosynthesis via de novo pathway; 5-amino-1-(5-phospho-D-ribosyl)imidazole from N(2)-formyl-N(1)-(5-phospho-D-ribosyl)glycinamide: step 1/2. In terms of biological role, phosphoribosylformylglycinamidine synthase involved in the purines biosynthetic pathway. Catalyzes the ATP-dependent conversion of formylglycinamide ribonucleotide (FGAR) and glutamine to yield formylglycinamidine ribonucleotide (FGAM) and glutamate. This is Phosphoribosylformylglycinamidine synthase from Vibrio cholerae serotype O1 (strain ATCC 39315 / El Tor Inaba N16961).